The following is a 122-amino-acid chain: Large ribosomal subunit protein uL14 (122 aa).

This sequence belongs to the universal ribosomal protein uL14 family. In terms of assembly, part of the 50S ribosomal subunit. Forms a cluster with proteins L3 and L19. In the 70S ribosome, L14 and L19 interact and together make contacts with the 16S rRNA in bridges B5 and B8.

In terms of biological role, binds to 23S rRNA. Forms part of two intersubunit bridges in the 70S ribosome. The chain is Large ribosomal subunit protein uL14 from Gluconacetobacter diazotrophicus (strain ATCC 49037 / DSM 5601 / CCUG 37298 / CIP 103539 / LMG 7603 / PAl5).